The primary structure comprises 131 residues: Histone H2B.1 (131 aa).

Residues 1–20 are compositionally biased toward basic and acidic residues; sequence MAPPKAEKKPASKAPAEKKP. The disordered stretch occupies residues 1–39; it reads MAPPKAEKKPASKAPAEKKPAAKKTASATDSKKRTKTRK. An N6-acetyllysine; alternate mark is found at Lys-8 and Lys-9. Residues Lys-8 and Lys-9 each participate in a glycyl lysine isopeptide (Lys-Gly) (interchain with G-Cter in SUMO); alternate cross-link. Ser-12 is modified (phosphoserine). Lys-13 carries the N6-acetyllysine modification. At Lys-18 the chain carries N6-acetyllysine; alternate. Lys-18 participates in a covalent cross-link: Glycyl lysine isopeptide (Lys-Gly) (interchain with G-Cter in SUMO); alternate. A Glycyl lysine isopeptide (Lys-Gly) (interchain with G-Cter in SUMO) cross-link involves residue Lys-19. Lys-125 participates in a covalent cross-link: Glycyl lysine isopeptide (Lys-Gly) (interchain with G-Cter in ubiquitin).

This sequence belongs to the histone H2B family. In terms of assembly, the nucleosome is a histone octamer containing two molecules each of H2A, H2B, H3 and H4 assembled in one H3-H4 heterotetramer and two H2A-H2B heterodimers. The octamer wraps approximately 147 bp of DNA. Monoubiquitinated to form H2BK123ub1. H2BK123ub1 gives a specific tag for epigenetic transcriptional activation and is also prerequisite for H3K4me and H3K79me formation. H2BK123ub1 also modulates the formation of double-strand breaks during meiosis and is a prerequisite for DNA-damage checkpoint activation. Post-translationally, phosphorylated by STE20 to form H2BS10ph during progression through meiotic prophase. May be correlated with chromosome condensation. In terms of processing, acetylated by GCN5 to form H2BK11ac and H2BK16ac. H2BK16ac can also be formed by ESA1. Acetylation of N-terminal lysines and particularly formation of H2BK11acK16ac has a positive effect on transcription. Sumoylation to form H2BK6su or H2BK7su, and probably also H2BK16su or H2BK17su, occurs preferentially near the telomeres and represses gene transcription.

Its subcellular location is the nucleus. The protein localises to the chromosome. Core component of nucleosome. Nucleosomes wrap and compact DNA into chromatin, limiting DNA accessibility to the cellular machineries which require DNA as a template. Histones thereby play a central role in transcription regulation, DNA repair, DNA replication and chromosomal stability. DNA accessibility is regulated via a complex set of post-translational modifications of histones, also called histone code, and nucleosome remodeling. The protein is Histone H2B.1 (HTB1) of Scheffersomyces stipitis (strain ATCC 58785 / CBS 6054 / NBRC 10063 / NRRL Y-11545) (Yeast).